The chain runs to 430 residues: Pre-B-cell leukemia transcription factor 2 (430 aa).

Residues 1 to 52 (MDERLLGPPPPGGGRGGLGLVGAEPGGPGEPPGGGDPGGGSGGVPGGRGKQD) form a disordered region. Over residues 13 to 48 (GGRGGLGLVGAEPGGPGEPPGGGDPGGGSGGVPGGR) the composition is skewed to gly residues. In terms of domain architecture, PBC spans 48–243 (RGKQDIGDIL…VMILRSRFLD (196 aa)). Positions 55–134 (DILQQIMTIT…EGVAGPEKGG (80 aa)) are PBC-A. Residues Ser-136, Ser-151, and Ser-159 each carry the phosphoserine modification. Residues 137–243 (AAAAAAAAAS…VMILRSRFLD (107 aa)) form a PBC-B region. The segment at residues 244-306 (ARRKRRNFSK…NKRIRYKKNI (63 aa)) is a DNA-binding region (homeobox; TALE-type). Disordered regions lie at residues 327–347 (GGHS…GGSF) and 375–430 (LRHS…DTSN). Residues Ser-330 and Ser-395 each carry the phosphoserine modification. The segment covering 409–418 (VTPSSVTSPT) has biased composition (polar residues).

This sequence belongs to the TALE/PBX homeobox family. As to quaternary structure, forms heterodimers with MEIS1 and heterotrimers with MEIS1 and HOXA9. Interacts with PBXIP1.

Its subcellular location is the nucleus. Functionally, transcriptional activator that binds the sequence 5'-ATCAATCAA-3'. Activates transcription of PF4 in complex with MEIS1. The polypeptide is Pre-B-cell leukemia transcription factor 2 (Pbx2) (Mus musculus (Mouse)).